Consider the following 386-residue polypeptide: Nucleosome assembly protein 1-like 4 (386 aa).

The tract at residues 1-28 (MAENSLSDGGPADSVEAAKNASNTEKLT) is disordered. At alanine 2 the chain carries N-acetylalanine. Phosphoserine is present on residues serine 5, serine 7, and serine 49. Threonine 51 bears the Phosphothreonine mark. Phosphoserine is present on residues serine 53 and serine 54. Phosphothreonine is present on threonine 58. An N6-acetyllysine modification is found at lysine 105. Position 125 is a phosphoserine (serine 125). Lysine 146 carries the N6-acetyllysine modification. The Nuclear localization signal motif lies at 265–271 (IKKKQKH). A Phosphoserine modification is found at serine 304. Residues 339–370 (AIEDDDNFEEGEEGEEEELEGDEEGEDEDDAD) show a composition bias toward acidic residues. The tract at residues 339–386 (AIEDDDNFEEGEEGEEEELEGDEEGEDEDDADVNPKKEPIQPAECKQQ) is disordered.

This sequence belongs to the nucleosome assembly protein (NAP) family. Interacts with core (H2A, H2B, H3, H4) and linker (H1) histones. Polyglutamylated and polyglycylated. These 2 modifications occur exclusively on glutamate residues and result in either polyglutamate or polyglycine chains on the gamma-carboxyl group. Both modifications can coexist on the same protein on adjacent residues, and lowering polyglycylation levels increases polyglutamylation, and reciprocally. Polyglutamylated by TTLL4. In terms of processing, phosphorylated at the G0/G1 boundary but it is not phosphorylated in S-phase. Phosphorylated protein remains in the cytoplasm in a complex with histones during the G0/G1 transition, whereas dephosphorylation triggers its transport into the nucleus at the G1/S-boundary.

It localises to the nucleus. It is found in the cytoplasm. Functionally, acts as a histone chaperone in nucleosome assembly. The chain is Nucleosome assembly protein 1-like 4 (Nap1l4) from Rattus norvegicus (Rat).